Reading from the N-terminus, the 359-residue chain is MSSSPSLNTWSDALSGFSIGWFPLGLVIVAAIPLVFIALYALTYGVYGERKISAFMQDRLGPMEVGFWGLLQTLADILKLLQKEDIVPTVADKFLFVIGPGILFVGSFLAFAVLPFGPAFIGADLNVGLFYAVGIVAIEVVGILAAGWGSNNKWALYGAVRSVAQIVSYEIPASIALLCAAMLAGTLSMQQIILMQAGPNGFLHWFLFTNPIAWLPFLIYFISSLAETNRAPFDIPEAESELVAGYFTEYSGMKFAVIFLAEYGSMFMVSAIISIAFLGGWTSPLPNIGGLELNTMTSGPVWGAFWIIMKGFFFIFVQMWLRWTLPRLRVDQLMYLCWKVLTPFSLVSFVLTAIWVINH.

8 consecutive transmembrane segments (helical) span residues 19-39 (IGWFPLGLVIVAAIPLVFIAL), 94-114 (FLFVIGPGILFVGSFLAFAVL), 127-147 (VGLFYAVGIVAIEVVGILAAG), 175-195 (IALLCAAMLAGTLSMQQIILM), 202-222 (FLHWFLFTNPIAWLPFLIYFI), 255-275 (FAVIFLAEYGSMFMVSAIISI), 301-321 (VWGAFWIIMKGFFFIFVQMWL), and 337-357 (CWKVLTPFSLVSFVLTAIWVI).

It belongs to the complex I subunit 1 family. NDH-1 is composed of 14 different subunits. Subunits NuoA, H, J, K, L, M, N constitute the membrane sector of the complex.

It localises to the cell inner membrane. The enzyme catalyses a quinone + NADH + 5 H(+)(in) = a quinol + NAD(+) + 4 H(+)(out). In terms of biological role, NDH-1 shuttles electrons from NADH, via FMN and iron-sulfur (Fe-S) centers, to quinones in the respiratory chain. The immediate electron acceptor for the enzyme in this species is believed to be ubiquinone. Couples the redox reaction to proton translocation (for every two electrons transferred, four hydrogen ions are translocated across the cytoplasmic membrane), and thus conserves the redox energy in a proton gradient. This subunit may bind ubiquinone. The polypeptide is NADH-quinone oxidoreductase subunit H (Chlorobaculum tepidum (strain ATCC 49652 / DSM 12025 / NBRC 103806 / TLS) (Chlorobium tepidum)).